The following is a 107-amino-acid chain: U1-lycotoxin-Ls1b (107 aa).

The signal sequence occupies residues 1–20 (MMKVLVVVALLATLISYSSS). Residues 21-41 (EGIDDLEADELLSLMANEQTR) constitute a propeptide that is removed on maturation. 4 cysteine pairs are disulfide-bonded: cysteine 44–cysteine 59, cysteine 51–cysteine 68, cysteine 58–cysteine 86, and cysteine 70–cysteine 84.

Belongs to the neurotoxin 19 (CSTX) family. 04 (U1-Lctx) subfamily. In terms of tissue distribution, expressed by the venom gland.

The protein localises to the secreted. The sequence is that of U1-lycotoxin-Ls1b from Lycosa singoriensis (Wolf spider).